Reading from the N-terminus, the 539-residue chain is Chaperonin GroEL (539 aa).

ATP-binding positions include 29–32 (TIGP), 86–90 (DGTTT), glycine 414, and aspartate 493.

It belongs to the chaperonin (HSP60) family. In terms of assembly, forms a cylinder of 14 subunits composed of two heptameric rings stacked back-to-back. Interacts with the co-chaperonin GroES.

Its subcellular location is the cytoplasm. It catalyses the reaction ATP + H2O + a folded polypeptide = ADP + phosphate + an unfolded polypeptide.. Functionally, together with its co-chaperonin GroES, plays an essential role in assisting protein folding. The GroEL-GroES system forms a nano-cage that allows encapsulation of the non-native substrate proteins and provides a physical environment optimized to promote and accelerate protein folding. In Staphylococcus aureus, this protein is Chaperonin GroEL.